A 358-amino-acid polypeptide reads, in one-letter code: Trans-enoyl reductase pvhC (358 aa).

Residue 48-51 participates in NADP(+) binding; sequence VDSK. 134–141 contributes to the substrate binding site; it reads ISFLTSGL. NADP(+) is bound by residues 169–172, 192–195, tyrosine 210, and 257–258; these read SSSC, SPHN, and LE. 278 to 282 serves as a coordination point for substrate; the sequence is GPSLL. Residue 347 to 348 coordinates NADP(+); that stretch reads VS.

This sequence belongs to the zinc-containing alcohol dehydrogenase family. In terms of assembly, monomer.

It participates in secondary metabolite biosynthesis. In terms of biological role, trans-enoyl reductase; part of the gene cluster that mediates the biosynthesis of varicidin A, an antifungal natural product containing a cis-octahydrodecalin core. The PKS module of pvhA together with the enoylreductase pvhC catalyze the formation of the polyketide unit which is then conjugated to L-isoleucine by the condensation domain of the NRPS module. Activity of the Dieckmann cyclase domain (RED) of pvhA results in release of an acyclic tetramate. The cytochrome P450 monooxygenase pvhE then catalyzes the oxidation of the C21 methyl group to a to carboxylate group. The methyltransferase pvhD then further methylates the pvhE product. The Diels-Alderase pvhB is able to catalyze Diels-Alder cycloaddition using both pvhE and pvhD products as substrates to form the decalin ring, yielding varicidin B and A, respectively. The polypeptide is Trans-enoyl reductase pvhC (Talaromyces variabilis (Penicillium variabile)).